The primary structure comprises 313 residues: Porphobilinogen deaminase (313 aa).

Cysteine 242 is subject to S-(dipyrrolylmethanemethyl)cysteine.

Belongs to the HMBS family. As to quaternary structure, monomer. It depends on dipyrromethane as a cofactor.

The catalysed reaction is 4 porphobilinogen + H2O = hydroxymethylbilane + 4 NH4(+). The protein operates within porphyrin-containing compound metabolism; protoporphyrin-IX biosynthesis; coproporphyrinogen-III from 5-aminolevulinate: step 2/4. Tetrapolymerization of the monopyrrole PBG into the hydroxymethylbilane pre-uroporphyrinogen in several discrete steps. This Klebsiella pneumoniae subsp. pneumoniae (strain ATCC 700721 / MGH 78578) protein is Porphobilinogen deaminase.